We begin with the raw amino-acid sequence, 321 residues long: Glucokinase (321 aa).

8 to 13 (GDVGGT) provides a ligand contact to ATP.

The protein belongs to the bacterial glucokinase family.

The protein resides in the cytoplasm. It catalyses the reaction D-glucose + ATP = D-glucose 6-phosphate + ADP + H(+). The polypeptide is Glucokinase (Klebsiella pneumoniae (strain 342)).